The sequence spans 207 residues: Probable GTP-binding protein EngB (207 aa).

The EngB-type G domain occupies 22 to 194 (DLPEIAFAGR…WRRIEEVLPA (173 aa)). GTP contacts are provided by residues 30 to 37 (GRSNVGKS), 57 to 61 (GRTQL), 75 to 78 (DLPG), 142 to 145 (TKCD), and 173 to 175 (FSA). Ser37 and Thr59 together coordinate Mg(2+).

Belongs to the TRAFAC class TrmE-Era-EngA-EngB-Septin-like GTPase superfamily. EngB GTPase family. It depends on Mg(2+) as a cofactor.

Necessary for normal cell division and for the maintenance of normal septation. The polypeptide is Probable GTP-binding protein EngB (Geotalea daltonii (strain DSM 22248 / JCM 15807 / FRC-32) (Geobacter daltonii)).